An 84-amino-acid chain; its full sequence is Agaphelin (84 aa).

The N-terminal stretch at 1–26 (MKMRVHLLAVSVLLVVLALQTTPAEA) is a signal peptide. One can recognise a Kazal-like domain in the interval 29–82 (NSEMATCACQLIYRPVCASNNESYSNECVLKCASETPTGRSIGLHKVKDGNCNG). 3 disulfides stabilise this stretch: cysteine 35–cysteine 60, cysteine 37–cysteine 56, and cysteine 45–cysteine 80. The N-linked (GlcNAc...) asparagine glycan is linked to asparagine 49.

In terms of assembly, interacts with human ELANE.

The protein localises to the secreted. In terms of biological role, functions as a slow and tight inhibitor of host neutrophil elastase (ELANE). Inhibits host proteinase 3 (PRTN3) and chymotrypsin. Does not inhibit other host proteases involved in coagulation or inflammation, such as cathepsin G (CTSG), trypsin, chymase, matriptase, beta-tryptase, kallikrein, urokinase-type plasminogen activator (PLAU), coagulation factors Xa (F10), XIa (F11), XIIa (F12), plasmin (PLG), thrombin (F2) and tissue-type plasminogen activator (PLAT). Inhibits host neutrophil chemotaxis induced by N-formylmethionine-leucyl-phenylalanine (fMLP) in vitro. Inhibits ELANE-mediated potentiation of platelet aggregation induced by CTSG in the host. Does not affect CTSG- or collagen-induced platelet aggregation. Blocks cleavage of tissue factor pathway inhibitor (TFPI) by ELANE in the host. Inhibits neutrophil-induced coagulation in the host by interfering with neutrophil extracellular traps (NET) formation. Exhibits anti-inflammatory activity. Reduces ischemia-induced activation of MAPK and NF-kappa-B pathways in the host. Decreases CCL2 and IL8 production in IL4- or lipopolysaccharide (LPS)-stimulated host epithelial cells. Reduces caspase-3 (CASP3)-dependent apoptosis in damaged host tissues. The polypeptide is Agaphelin (Anopheles gambiae (African malaria mosquito)).